Consider the following 382-residue polypeptide: Pyrimidine monooxygenase RutA (382 aa).

Residues 68 to 69 (IK), Asn134, Glu143, 159 to 160 (RY), and Ser209 each bind FMN.

The protein belongs to the NtaA/SnaA/DszA monooxygenase family. RutA subfamily.

It catalyses the reaction uracil + FMNH2 + NADH + O2 = (Z)-3-ureidoacrylate + FMN + NAD(+) + H2O + H(+). The catalysed reaction is thymine + FMNH2 + NADH + O2 = (Z)-2-methylureidoacrylate + FMN + NAD(+) + H2O + H(+). In terms of biological role, catalyzes the pyrimidine ring opening between N-3 and C-4 by an unusual flavin hydroperoxide-catalyzed mechanism, adding oxygen atoms in the process to yield ureidoacrylate peracid, that immediately reacts with FMN forming ureidoacrylate and FMN-N(5)-oxide. The FMN-N(5)-oxide reacts spontaneously with NADH to produce FMN. Requires the flavin reductase RutF to regenerate FMN in vivo. The chain is Pyrimidine monooxygenase RutA from Escherichia coli (strain B / BL21-DE3).